A 316-amino-acid chain; its full sequence is N-acetyl-gamma-glutamyl-phosphate reductase (316 aa).

Cys136 is a catalytic residue.

It belongs to the NAGSA dehydrogenase family. Type 1 subfamily.

Its subcellular location is the cytoplasm. The catalysed reaction is N-acetyl-L-glutamate 5-semialdehyde + phosphate + NADP(+) = N-acetyl-L-glutamyl 5-phosphate + NADPH + H(+). It participates in amino-acid biosynthesis; L-arginine biosynthesis; N(2)-acetyl-L-ornithine from L-glutamate: step 3/4. Functionally, catalyzes the NADPH-dependent reduction of N-acetyl-5-glutamyl phosphate to yield N-acetyl-L-glutamate 5-semialdehyde. This is N-acetyl-gamma-glutamyl-phosphate reductase from Xanthomonas campestris pv. campestris (strain B100).